Reading from the N-terminus, the 173-residue chain is Ribosome maturation factor RimM (173 aa).

Residues 95-169 (EGSYYFKDIL…RIEVTLLEGL (75 aa)) form the PRC barrel domain.

It belongs to the RimM family. As to quaternary structure, binds ribosomal protein uS19.

The protein localises to the cytoplasm. Its function is as follows. An accessory protein needed during the final step in the assembly of 30S ribosomal subunit, possibly for assembly of the head region. Essential for efficient processing of 16S rRNA. May be needed both before and after RbfA during the maturation of 16S rRNA. It has affinity for free ribosomal 30S subunits but not for 70S ribosomes. The sequence is that of Ribosome maturation factor RimM from Lactobacillus gasseri (strain ATCC 33323 / DSM 20243 / BCRC 14619 / CIP 102991 / JCM 1131 / KCTC 3163 / NCIMB 11718 / NCTC 13722 / AM63).